The chain runs to 207 residues: Large ribosomal subunit protein uL4 (207 aa).

Residues 49–78 form a disordered region; it reads HAVKNRSAVSGGGRKPWRQKGTGRARQGSI.

Belongs to the universal ribosomal protein uL4 family. Part of the 50S ribosomal subunit.

Functionally, one of the primary rRNA binding proteins, this protein initially binds near the 5'-end of the 23S rRNA. It is important during the early stages of 50S assembly. It makes multiple contacts with different domains of the 23S rRNA in the assembled 50S subunit and ribosome. Forms part of the polypeptide exit tunnel. The protein is Large ribosomal subunit protein uL4 of Streptococcus equi subsp. zooepidemicus (strain H70).